Consider the following 725-residue polypeptide: Protein ALEX (725 aa).

Disordered regions lie at residues 1–93, 177–226, 256–340, 396–481, 508–528, 584–624, and 638–675; these read MSPS…ARAQ, GAIA…PLTD, EPPL…PSQP, PILT…SPLL, PMQV…PLGH, LPGL…AASS, and ATRS…GRPR. Basic residues predominate over residues 41-51; sequence HLRRKPCHSRH. The span at 260–276 shows a compositional bias: polar residues; sequence GSTTTPLSIWTAPQSQV. Basic and acidic residues-rich tracts occupy residues 297 to 307 and 314 to 326; these read QLSEKQPRWKE and RWKE…REGT. Pro residues-rich tracts occupy residues 423 to 442 and 459 to 473; these read PSQP…PGQP and RSLP…PRSP. 2 stretches are compositionally biased toward low complexity: residues 584 to 598 and 643 to 658; these read LPGL…AAAG and ATQS…EAAS.

Belongs to the ALEX family. In terms of assembly, interacts with the N-terminal region of the XLas isoforms of guanine nucleotide-binding protein G(s) subunit alpha.

It is found in the cell membrane. The protein localises to the cell projection. The protein resides in the ruffle. May inhibit the adenylyl cyclase-stimulating activity of guanine nucleotide-binding protein G(s) subunit alpha which is produced from the same locus in a different open reading frame. This chain is Protein ALEX, found in Mus musculus (Mouse).